The following is a 186-amino-acid chain: Hydra actinoporin-like toxin 6 (186 aa).

A signal peptide spans 1–21 (MLVYVCLVVILIQLPFGAAGG). Positions 158–160 (RAG) match the Cell attachment site motif.

Belongs to the actinoporin family. HALT subfamily. In terms of assembly, octamer or nonamer in membranes. Monomer in the soluble state. In vitro, interacts with folate receptor alpha (of target organism). In terms of tissue distribution, expressed female germline during oogenesis.

It is found in the nematocyst. The protein localises to the secreted. Its subcellular location is the target cell membrane. Its function is as follows. Pore-forming protein that forms hydrophilic pores and causes cytolysis. Compared to equinatoxin-2 (AC P61914), it reveals lower cytolysis activity (5-12-fold difference, tested on erythrocytes), a larger pore size (probably 2-3 nm) and different affinity to membrane lipids (100-fold lower affinity to sphingomyelin). Binds to sulfatides. Shows cytolytic activity on HeLa cells, with a different potency than its paralogs (from most potent to less potent: HALT-4&gt;HALT-6~HALT-1&gt;HALT-3&gt;HALT-7&gt;HALT-2). Pore formation is a multi-step process that involves specific recognition of membrane lipid by a protein aromatic residues rich region, firm binding to the membrane (mainly driven by hydrophobic interactions) accompanied by the transfer of the N-terminal region to the lipid-water interface and finally pore formation after oligomerization of monomers. In vitro, binds to the folate receptor alpha (FOLR1), a GPI-anchored membrane protein that plays a major role in the uptake of folate/folic acid into cells via endocytosis, suggesting a possible involvement of this receptor in the mechanism of HALT-1-induced cell lysis. In vivo, does not cause visible paralysis in larvae of the blowfly Sarcophaga faculata, the most common arthropod prey of Hydra. This Hydra vulgaris (Hydra) protein is Hydra actinoporin-like toxin 6.